A 631-amino-acid polypeptide reads, in one-letter code: Arginine--tRNA ligase (631 aa).

The short motif at proline 132–histidine 142 is the 'HIGH' region element.

It belongs to the class-I aminoacyl-tRNA synthetase family.

The protein resides in the cytoplasm. The enzyme catalyses tRNA(Arg) + L-arginine + ATP = L-arginyl-tRNA(Arg) + AMP + diphosphate. This is Arginine--tRNA ligase from Halobacterium salinarum (strain ATCC 700922 / JCM 11081 / NRC-1) (Halobacterium halobium).